We begin with the raw amino-acid sequence, 141 residues long: uncharacterized protein (141 aa).

It is found in the mitochondrion. This is an uncharacterized protein from Arabidopsis thaliana (Mouse-ear cress).